The sequence spans 492 residues: N-succinylglutamate 5-semialdehyde dehydrogenase (492 aa).

Position 225–230 (225–230 (GSSNTG)) interacts with NAD(+). Active-site residues include Glu-248 and Cys-282.

This sequence belongs to the aldehyde dehydrogenase family. AstD subfamily.

The catalysed reaction is N-succinyl-L-glutamate 5-semialdehyde + NAD(+) + H2O = N-succinyl-L-glutamate + NADH + 2 H(+). It functions in the pathway amino-acid degradation; L-arginine degradation via AST pathway; L-glutamate and succinate from L-arginine: step 4/5. Its function is as follows. Catalyzes the NAD-dependent reduction of succinylglutamate semialdehyde into succinylglutamate. In Colwellia psychrerythraea (strain 34H / ATCC BAA-681) (Vibrio psychroerythus), this protein is N-succinylglutamate 5-semialdehyde dehydrogenase.